The chain runs to 384 residues: Glucose-fructose oxidoreductase domain-containing protein 2 (384 aa).

The signal sequence occupies residues 1 to 25 (MMTLPGIGVFGTGNTARVLIQLLRA). The tract at residues 358–384 (GEWESVELTNEETDSNQNLSEVIQHNL) is disordered. Residues 372-384 (SNQNLSEVIQHNL) show a composition bias toward polar residues.

The protein belongs to the Gfo/Idh/MocA family.

It is found in the secreted. The protein localises to the extracellular space. Its subcellular location is the extracellular matrix. Its function is as follows. Promotes matrix assembly. The sequence is that of Glucose-fructose oxidoreductase domain-containing protein 2 (gfod2) from Xenopus laevis (African clawed frog).